The following is a 466-amino-acid chain: Histidine--tRNA ligase (466 aa).

The protein belongs to the class-II aminoacyl-tRNA synthetase family. As to quaternary structure, homodimer.

The protein localises to the cytoplasm. The catalysed reaction is tRNA(His) + L-histidine + ATP = L-histidyl-tRNA(His) + AMP + diphosphate + H(+). This chain is Histidine--tRNA ligase, found in Bifidobacterium animalis subsp. lactis (strain AD011).